Consider the following 355-residue polypeptide: Protein pelota homolog (355 aa).

It belongs to the eukaryotic release factor 1 family. Pelota subfamily. In terms of assembly, monomer. It depends on a divalent metal cation as a cofactor.

It localises to the cytoplasm. Functionally, may function in recognizing stalled ribosomes, interact with stem-loop structures in stalled mRNA molecules, and effect endonucleolytic cleavage of the mRNA. May play a role in the release non-functional ribosomes and degradation of damaged mRNAs. Has endoribonuclease activity. The sequence is that of Protein pelota homolog from Halorubrum lacusprofundi (strain ATCC 49239 / DSM 5036 / JCM 8891 / ACAM 34).